We begin with the raw amino-acid sequence, 322 residues long: Crystallin J1B (322 aa).

It belongs to the ADP-ribosylglycohydrolase family. J1 crystallin subfamily. As to expression, expressed in the rhopalia. Present in both the large and small eyes.

The polypeptide is Crystallin J1B (Tripedalia cystophora (Jellyfish)).